A 371-amino-acid polypeptide reads, in one-letter code: Aspartate-semialdehyde dehydrogenase (371 aa).

Residues 11-14 (RGMV), 38-39 (TS), and Gln-75 contribute to the NADP(+) site. Position 104 (Arg-104) interacts with phosphate. The Acyl-thioester intermediate role is filled by Cys-137. Gln-164 contacts substrate. 167 to 168 (SG) is an NADP(+) binding site. Glu-243 serves as a coordination point for substrate. Residue Lys-246 coordinates phosphate. Arg-269 contacts substrate. His-276 serves as the catalytic Proton acceptor. Gln-352 contributes to the NADP(+) binding site.

Belongs to the aspartate-semialdehyde dehydrogenase family. Homodimer.

The enzyme catalyses L-aspartate 4-semialdehyde + phosphate + NADP(+) = 4-phospho-L-aspartate + NADPH + H(+). Its pathway is amino-acid biosynthesis; L-lysine biosynthesis via DAP pathway; (S)-tetrahydrodipicolinate from L-aspartate: step 2/4. The protein operates within amino-acid biosynthesis; L-methionine biosynthesis via de novo pathway; L-homoserine from L-aspartate: step 2/3. It participates in amino-acid biosynthesis; L-threonine biosynthesis; L-threonine from L-aspartate: step 2/5. Catalyzes the NADPH-dependent formation of L-aspartate-semialdehyde (L-ASA) by the reductive dephosphorylation of L-aspartyl-4-phosphate. The sequence is that of Aspartate-semialdehyde dehydrogenase from Buchnera aphidicola subsp. Schizaphis graminum (strain Sg).